The chain runs to 359 residues: Histidinol-phosphate aminotransferase (359 aa).

An N6-(pyridoxal phosphate)lysine modification is found at Lys217.

This sequence belongs to the class-II pyridoxal-phosphate-dependent aminotransferase family. Histidinol-phosphate aminotransferase subfamily. Homodimer. Pyridoxal 5'-phosphate is required as a cofactor.

It carries out the reaction L-histidinol phosphate + 2-oxoglutarate = 3-(imidazol-4-yl)-2-oxopropyl phosphate + L-glutamate. The protein operates within amino-acid biosynthesis; L-histidine biosynthesis; L-histidine from 5-phospho-alpha-D-ribose 1-diphosphate: step 7/9. This chain is Histidinol-phosphate aminotransferase, found in Citrobacter koseri (strain ATCC BAA-895 / CDC 4225-83 / SGSC4696).